The primary structure comprises 194 residues: uncharacterized protein (194 aa).

Residues 6–66 (SGKYEKILQA…AIAENLLTHT (61 aa)) enclose the HTH tetR-type domain. A DNA-binding region (H-T-H motif) is located at residues 29 to 48 (SISDIVKKAGTAQGTFYLYF).

This is an uncharacterized protein from Bacillus subtilis (strain 168).